The primary structure comprises 426 residues: tRNA (guanine(37)-N(1))-methyltransferase (426 aa).

S-adenosyl-L-methionine-binding positions include His203, 242–243 (DL), 269–270 (DA), and Asn292. Residues 374-426 (RISFKMPTLKKRKDTENNDDQENNNNSSNNNNNNKIDYNEAVSSGGEGKKIKH) form a disordered region. Over residues 396–407 (NNNNSSNNNNNN) the composition is skewed to low complexity.

This sequence belongs to the class I-like SAM-binding methyltransferase superfamily. TRM5/TYW2 family. In terms of assembly, monomer.

It is found in the mitochondrion matrix. Its subcellular location is the nucleus. The protein localises to the cytoplasm. It catalyses the reaction guanosine(37) in tRNA + S-adenosyl-L-methionine = N(1)-methylguanosine(37) in tRNA + S-adenosyl-L-homocysteine + H(+). Functionally, specifically methylates the N1 position of guanosine-37 in various cytoplasmic and mitochondrial tRNAs. Methylation is not dependent on the nature of the nucleoside 5' of the target nucleoside. This is the first step in the biosynthesis of wybutosine (yW), a modified base adjacent to the anticodon of tRNAs and required for accurate decoding. This Heterostelium pallidum (strain ATCC 26659 / Pp 5 / PN500) (Cellular slime mold) protein is tRNA (guanine(37)-N(1))-methyltransferase (trmt5).